Consider the following 407-residue polypeptide: Nicotinate phosphoribosyltransferase (407 aa).

The residue at position 224 (histidine 224) is a Phosphohistidine; by autocatalysis.

This sequence belongs to the NAPRTase family. In terms of processing, transiently phosphorylated on a His residue during the reaction cycle. Phosphorylation strongly increases the affinity for substrates and increases the rate of nicotinate D-ribonucleotide production. Dephosphorylation regenerates the low-affinity form of the enzyme, leading to product release.

It carries out the reaction nicotinate + 5-phospho-alpha-D-ribose 1-diphosphate + ATP + H2O = nicotinate beta-D-ribonucleotide + ADP + phosphate + diphosphate. It participates in cofactor biosynthesis; NAD(+) biosynthesis; nicotinate D-ribonucleotide from nicotinate: step 1/1. Its function is as follows. Catalyzes the synthesis of beta-nicotinate D-ribonucleotide from nicotinate and 5-phospho-D-ribose 1-phosphate at the expense of ATP. The polypeptide is Nicotinate phosphoribosyltransferase (Pseudomonas syringae pv. tomato (strain ATCC BAA-871 / DC3000)).